The chain runs to 333 residues: Probable G-protein coupled receptor 33 (333 aa).

Residues 1–30 (MDLINSTDYLINASTLVRNSTQFLAPASKM) lie on the Extracellular side of the membrane. Residues N5, N12, and N19 are each glycosylated (N-linked (GlcNAc...) asparagine). A helical transmembrane segment spans residues 31–53 (IIALSLYISSIIGTITNGLYLWV). The Cytoplasmic portion of the chain corresponds to 54–64 (LRFKMKQTVNT). A helical transmembrane segment spans residues 65–86 (LLFFHLILSYFISTMILPFMAT). The Extracellular portion of the chain corresponds to 87 to 103 (SQLQDNHWNFGTALCKV). The cysteines at positions 101 and 179 are disulfide-linked. Residues 104–124 (FNGTLSLGMFTSVFFLSAIGL) traverse the membrane as a helical segment. Topologically, residues 125–143 (DRYLLTLHPVWSQQHRTPR) are cytoplasmic. The chain crosses the membrane as a helical span at residues 144–165 (WASSIVLGVWISAAALSIPYLI). Residues 166-209 (FRQTHHDRKGKVTCQNNYAVSTNWESKEMQALRQWIHVACFISR) are Extracellular-facing. The chain crosses the membrane as a helical span at residues 210–230 (FLLGFLLPFFIIIFCYERVAS). Residues 231 to 246 (KVKERSLFKSSKPFKV) are Cytoplasmic-facing. A helical membrane pass occupies residues 247-268 (MMTAIISFFVCWMPYHIHQGLL). Residues 269-283 (LTMNQSLLLELTLIL) lie on the Extracellular side of the membrane. N272 is a glycosylation site (N-linked (GlcNAc...) asparagine). A helical transmembrane segment spans residues 284-303 (TVLTTSFNTIFSPTLYLFVG). The Cytoplasmic portion of the chain corresponds to 304 to 333 (ENFKKVFKKSILALFESTFSEDSSVERTQT).

This sequence belongs to the G-protein coupled receptor 1 family.

The protein localises to the cell membrane. Functionally, orphan receptor; could be a chemoattractant receptor. This chain is Probable G-protein coupled receptor 33 (GPR33), found in Pan paniscus (Pygmy chimpanzee).